Consider the following 372-residue polypeptide: Queuine tRNA-ribosyltransferase (372 aa).

Asp89 acts as the Proton acceptor in catalysis. Substrate-binding positions include 89–93, Asp143, Gln185, and Gly212; that span reads DSGGF. The tract at residues 243–249 is RNA binding; sequence GVGKPED. Residue Asp262 is the Nucleophile of the active site. The segment at 267–271 is RNA binding; important for wobble base 34 recognition; sequence TRNAR. Zn(2+)-binding residues include Cys300, Cys302, Cys305, and His331.

Belongs to the queuine tRNA-ribosyltransferase family. As to quaternary structure, homodimer. Within each dimer, one monomer is responsible for RNA recognition and catalysis, while the other monomer binds to the replacement base PreQ1. Requires Zn(2+) as cofactor.

It catalyses the reaction 7-aminomethyl-7-carbaguanine + guanosine(34) in tRNA = 7-aminomethyl-7-carbaguanosine(34) in tRNA + guanine. It functions in the pathway tRNA modification; tRNA-queuosine biosynthesis. Catalyzes the base-exchange of a guanine (G) residue with the queuine precursor 7-aminomethyl-7-deazaguanine (PreQ1) at position 34 (anticodon wobble position) in tRNAs with GU(N) anticodons (tRNA-Asp, -Asn, -His and -Tyr). Catalysis occurs through a double-displacement mechanism. The nucleophile active site attacks the C1' of nucleotide 34 to detach the guanine base from the RNA, forming a covalent enzyme-RNA intermediate. The proton acceptor active site deprotonates the incoming PreQ1, allowing a nucleophilic attack on the C1' of the ribose to form the product. After dissociation, two additional enzymatic reactions on the tRNA convert PreQ1 to queuine (Q), resulting in the hypermodified nucleoside queuosine (7-(((4,5-cis-dihydroxy-2-cyclopenten-1-yl)amino)methyl)-7-deazaguanosine). The sequence is that of Queuine tRNA-ribosyltransferase from Pseudomonas aeruginosa (strain LESB58).